A 106-amino-acid polypeptide reads, in one-letter code: ATP-dependent Clp protease adapter protein ClpS (106 aa).

This sequence belongs to the ClpS family. In terms of assembly, binds to the N-terminal domain of the chaperone ClpA.

Involved in the modulation of the specificity of the ClpAP-mediated ATP-dependent protein degradation. This is ATP-dependent Clp protease adapter protein ClpS from Edwardsiella ictaluri (strain 93-146).